A 374-amino-acid polypeptide reads, in one-letter code: Probable tuliposide A-converting enzyme b6, amyloplastic (374 aa).

The N-terminal 68 residues, 1 to 68, are a transit peptide targeting the amyloplast; that stretch reads MSVALFCGPP…TNSSLSPSPT (68 aa). Residue S226 is the Acyl-ester intermediate of the active site. Residues D316 and H348 each act as charge relay system in the active site.

It belongs to the AB hydrolase superfamily. As to quaternary structure, homodimer.

Its subcellular location is the plastid. The protein resides in the amyloplast. It carries out the reaction 6-tuliposide A = tulipalin A + D-glucose. Its function is as follows. Lactone-forming carboxylesterases, specifically catalyzing intramolecular transesterification, but not hydrolysis. Involved in the biosynthesis of tulipalins, defensive chemicals that show antimicrobial activities against a broad range of strains of bacteria and fungi. Substrates are 6-tuliposide A &gt; 6-tuliposide B. This Tulipa gesneriana (Garden tulip) protein is Probable tuliposide A-converting enzyme b6, amyloplastic (TCEA-B6).